The following is a 90-amino-acid chain: Large ribosomal subunit protein bL27 (90 aa).

Residues 1-22 (MAHKKAGGSSRNGRDSESKRLG) form a disordered region.

This sequence belongs to the bacterial ribosomal protein bL27 family.

The polypeptide is Large ribosomal subunit protein bL27 (Allorhizobium ampelinum (strain ATCC BAA-846 / DSM 112012 / S4) (Agrobacterium vitis (strain S4))).